Here is a 205-residue protein sequence, read N- to C-terminus: Holliday junction branch migration complex subunit RuvA (205 aa).

The tract at residues 1 to 67 is domain I; that stretch reads MITSIFGKVT…QIIEEAFAFN (67 aa). The tract at residues 68 to 146 is domain II; the sequence is TLEEKEWFCR…NNKNIKGVQV (79 aa). The segment at 147-150 is flexible linker; the sequence is ADGY. Positions 150–205 are domain III; that stretch reads YDELFETLKSLGYKQQEIQDALKMIEVKPDFDISQLVAEVIKLMSFKNNEITNKTA.

It belongs to the RuvA family. In terms of assembly, homotetramer. Forms an RuvA(8)-RuvB(12)-Holliday junction (HJ) complex. HJ DNA is sandwiched between 2 RuvA tetramers; dsDNA enters through RuvA and exits via RuvB. An RuvB hexamer assembles on each DNA strand where it exits the tetramer. Each RuvB hexamer is contacted by two RuvA subunits (via domain III) on 2 adjacent RuvB subunits; this complex drives branch migration. In the full resolvosome a probable DNA-RuvA(4)-RuvB(12)-RuvC(2) complex forms which resolves the HJ.

It is found in the cytoplasm. The RuvA-RuvB-RuvC complex processes Holliday junction (HJ) DNA during genetic recombination and DNA repair, while the RuvA-RuvB complex plays an important role in the rescue of blocked DNA replication forks via replication fork reversal (RFR). RuvA specifically binds to HJ cruciform DNA, conferring on it an open structure. The RuvB hexamer acts as an ATP-dependent pump, pulling dsDNA into and through the RuvAB complex. HJ branch migration allows RuvC to scan DNA until it finds its consensus sequence, where it cleaves and resolves the cruciform DNA. This Mycoplasma genitalium (strain ATCC 33530 / DSM 19775 / NCTC 10195 / G37) (Mycoplasmoides genitalium) protein is Holliday junction branch migration complex subunit RuvA.